The sequence spans 1414 residues: DNA-directed RNA polymerase subunit beta'' (1414 aa).

Cysteine 220, cysteine 293, cysteine 300, and cysteine 303 together coordinate Zn(2+).

The protein belongs to the RNA polymerase beta' chain family. RpoC2 subfamily. In plastids the minimal PEP RNA polymerase catalytic core is composed of four subunits: alpha, beta, beta', and beta''. When a (nuclear-encoded) sigma factor is associated with the core the holoenzyme is formed, which can initiate transcription. Requires Zn(2+) as cofactor.

The protein localises to the plastid. It localises to the chloroplast. It catalyses the reaction RNA(n) + a ribonucleoside 5'-triphosphate = RNA(n+1) + diphosphate. In terms of biological role, DNA-dependent RNA polymerase catalyzes the transcription of DNA into RNA using the four ribonucleoside triphosphates as substrates. This is DNA-directed RNA polymerase subunit beta'' from Angiopteris evecta (Mule's foot fern).